The primary structure comprises 344 residues: F17d-G fimbrial adhesin (344 aa).

A signal peptide spans 1–22 (MTNFYKVFLAVFILVCCNISQA). Positions 23 to 199 (AVSFIGSTEN…SLNPFTLNDT (177 aa)) are receptor-binding lectin domain. A carbohydrate-binding positions include 65–66 (AN), 110–111 (DT), and 139–142 (STQG). A disulfide bond links cysteine 75 and cysteine 132. The interval 200-344 (VTSCRLLTPS…GISTFTFSYQ (145 aa)) is fimbrillin-binding domain. The interval 288–308 (LKFGPDSPVKGNENQWQLSTG) is disordered. Over residues 299-308 (NENQWQLSTG) the composition is skewed to polar residues.

The protein belongs to the fimbrial protein family.

It is found in the fimbrium. Its function is as follows. Essential fimbrial adhesion factor that mediates binding to N-acetylglucosamine-containing receptors in the host intestinal microvilli, leading to colonization of the intestinal tissue, and diarrhea or septicemia. Also confers adhesiveness to laminin and basement membranes. This Escherichia coli protein is F17d-G fimbrial adhesin (f17dG).